The chain runs to 339 residues: Protein-glutamate methylesterase/protein-glutamine glutaminase 2 (339 aa).

The Response regulatory domain maps to 2-119 (NIGIVNDLPL…GLSTDASPQA (118 aa)). Asp-53 is subject to 4-aspartylphosphate. In terms of domain architecture, CheB-type methylesterase spans 141 to 336 (PGPAPERGQP…PQLISRITRP (196 aa)). Residues Ser-158, His-185, and Asp-278 contribute to the active site.

Belongs to the CheB family. Post-translationally, phosphorylated by CheA. Phosphorylation of the N-terminal regulatory domain activates the methylesterase activity.

The protein localises to the cytoplasm. It carries out the reaction [protein]-L-glutamate 5-O-methyl ester + H2O = L-glutamyl-[protein] + methanol + H(+). The catalysed reaction is L-glutaminyl-[protein] + H2O = L-glutamyl-[protein] + NH4(+). In terms of biological role, involved in chemotaxis. Part of a chemotaxis signal transduction system that modulates chemotaxis in response to various stimuli. Catalyzes the demethylation of specific methylglutamate residues introduced into the chemoreceptors (methyl-accepting chemotaxis proteins or MCP) by CheR. Also mediates the irreversible deamidation of specific glutamine residues to glutamic acid. In Burkholderia lata (strain ATCC 17760 / DSM 23089 / LMG 22485 / NCIMB 9086 / R18194 / 383), this protein is Protein-glutamate methylesterase/protein-glutamine glutaminase 2.